We begin with the raw amino-acid sequence, 380 residues long: Flap endonuclease 1 (380 aa).

The N-domain stretch occupies residues 1 to 104 (MGIQGLAKLI…GELAKRSERR (104 aa)). Arg19 is modified (symmetric dimethylarginine; by PRMT5). Asp34 is a Mg(2+) binding site. Arg47 and Arg70 together coordinate DNA. Lys80 is subject to N6-acetyllysine. Asp86 contacts Mg(2+). Arg100 and Arg104 each carry symmetric dimethylarginine; by PRMT5. Residues 122-253 (EVEKFTKRLV…KRAVDLIQKH (132 aa)) form an I-domain region. Residues Glu158, Glu160, Asp179, and Asp181 each coordinate Mg(2+). Glu158 contributes to the DNA binding site. Ser187 is subject to Phosphoserine; by CDK2. Arg192 carries the post-translational modification Symmetric dimethylarginine; by PRMT5. Phosphoserine is present on Ser197. 2 residues coordinate DNA: Gly231 and Asp233. Asp233 lines the Mg(2+) pocket. Ser255, Ser293, and Ser335 each carry phosphoserine. Residues 327–380 (RLSKSRQGSTQGRLDDFFKVTGSLSSAKRKEPEPKGSTKKKAKTGAAGKFKRGK) form a disordered region. Thr336 bears the Phosphothreonine mark. Residues 336–344 (TQGRLDDFF) form an interaction with PCNA region. Lys354 carries the N6-acetyllysine modification. A compositionally biased stretch (basic residues) spans 363–380 (STKKKAKTGAAGKFKRGK). Phosphothreonine is present on Thr364. N6-acetyllysine is present on residues Lys375, Lys377, and Lys380.

The protein belongs to the XPG/RAD2 endonuclease family. FEN1 subfamily. Interacts with PCNA. Three molecules of FEN1 bind to one PCNA trimer with each molecule binding to one PCNA monomer. PCNA stimulates the nuclease activity without altering cleavage specificity. The C-terminal domain binds EP300; can bind simultaneously to both PCNA and EP300. Interacts with DDX11; this interaction is direct and increases flap endonuclease activity of FEN1. Interacts with WDR4; regulating its endonuclease activity. Interacts with POLB. Mg(2+) serves as cofactor. In terms of processing, acetylated by EP300. Acetylation inhibits both endonuclease and exonuclease activity. Acetylation also reduces DNA-binding activity but does not affect interaction with PCNA or EP300. Phosphorylation upon DNA damage induces relocalization to the nuclear plasma. Phosphorylation at Ser-187 by CDK2 occurs during late S-phase and results in dissociation from PCNA. Post-translationally, methylation at Arg-192 by PRMT5 impedes Ser-187 phosphorylation and increases interaction with PCNA.

Its subcellular location is the nucleus. The protein localises to the nucleolus. It is found in the nucleoplasm. The protein resides in the mitochondrion. In terms of biological role, structure-specific nuclease with 5'-flap endonuclease and 5'-3' exonuclease activities involved in DNA replication and repair. During DNA replication, cleaves the 5'-overhanging flap structure that is generated by displacement synthesis when DNA polymerase encounters the 5'-end of a downstream Okazaki fragment. It enters the flap from the 5'-end and then tracks to cleave the flap base, leaving a nick for ligation. Also involved in the long patch base excision repair (LP-BER) pathway, by cleaving within the apurinic/apyrimidinic (AP) site-terminated flap. Acts as a genome stabilization factor that prevents flaps from equilibrating into structures that lead to duplications and deletions. Also possesses 5'-3' exonuclease activity on nicked or gapped double-stranded DNA, and exhibits RNase H activity. Also involved in replication and repair of rDNA and in repairing mitochondrial DNA. The protein is Flap endonuclease 1 of Macaca fascicularis (Crab-eating macaque).